Consider the following 165-residue polypeptide: Putative universal stress protein SH1215 (165 aa).

The protein belongs to the universal stress protein A family.

The protein resides in the cytoplasm. The polypeptide is Putative universal stress protein SH1215 (Staphylococcus haemolyticus (strain JCSC1435)).